Reading from the N-terminus, the 212-residue chain is Peptide methionine sulfoxide reductase MsrA (212 aa).

Cys52 is an active-site residue.

Belongs to the MsrA Met sulfoxide reductase family.

It catalyses the reaction L-methionyl-[protein] + [thioredoxin]-disulfide + H2O = L-methionyl-(S)-S-oxide-[protein] + [thioredoxin]-dithiol. The enzyme catalyses [thioredoxin]-disulfide + L-methionine + H2O = L-methionine (S)-S-oxide + [thioredoxin]-dithiol. In terms of biological role, has an important function as a repair enzyme for proteins that have been inactivated by oxidation. Catalyzes the reversible oxidation-reduction of methionine sulfoxide in proteins to methionine. The sequence is that of Peptide methionine sulfoxide reductase MsrA from Escherichia coli (strain ATCC 8739 / DSM 1576 / NBRC 3972 / NCIMB 8545 / WDCM 00012 / Crooks).